The primary structure comprises 485 residues: MSPQTETKASVGFKAGVKDYKLTYYTPEYETKDTDILAAFRVTPQPGVPPEEAGAAVAAESSTGTWTTVWTDGLTSLDRYKGRCYGIEPVPGEDNQYIAYVAYPLDLFEEGSVTNMFTSIVGNVFGFKALRALRLEDLRIPTAYVKTFAGPPHGIQVERDKLNKYGRPLLGCTIKPKLGLSAKNYGRACYECLRGGLDFTKDDENVNSQPFMRWRDRFLFCAEAIYKAQAETGEIKGHYLNATAGTCEEMLKRAVFARELGVPIIMHDYLTGGFTANTSLSHYCRDNGLLLHIHRAMHAVIDRQKNHGIHFRVLAKALRMSGGDHIHSGTVVGKLEGEREITLGFVDLLRDDFIEKDRSRGIYFTQDWVSLPGVLPVASGGIHVWHMPALTEIFGDDSVLQFGGGTLGHPWGNAPGAVANRVALEACVQARNEGRDLATEGNEIIREATKWSPELAAACEVWKEIKFEFQAMDTLDTDKDKDKKR.

A propeptide spanning residues 1–2 (MS) is cleaved from the precursor. An N-acetylproline modification is found at Pro3. Lys14 carries the post-translational modification N6,N6,N6-trimethyllysine. Substrate is bound by residues Asn123 and Thr173. The active-site Proton acceptor is Lys175. Lys177 is a binding site for substrate. Mg(2+) contacts are provided by Lys201, Asp203, and Glu204. The residue at position 201 (Lys201) is an N6-carboxylysine. Catalysis depends on His294, which acts as the Proton acceptor. Arg295, His327, and Ser379 together coordinate substrate.

This sequence belongs to the RuBisCO large chain family. Type I subfamily. In terms of assembly, heterohexadecamer of 8 large chains and 8 small chains; disulfide-linked. The disulfide link is formed within the large subunit homodimers. The cofactor is Mg(2+). In terms of processing, the disulfide bond which can form in the large chain dimeric partners within the hexadecamer appears to be associated with oxidative stress and protein turnover.

Its subcellular location is the plastid. The protein resides in the chloroplast. It catalyses the reaction 2 (2R)-3-phosphoglycerate + 2 H(+) = D-ribulose 1,5-bisphosphate + CO2 + H2O. The catalysed reaction is D-ribulose 1,5-bisphosphate + O2 = 2-phosphoglycolate + (2R)-3-phosphoglycerate + 2 H(+). In terms of biological role, ruBisCO catalyzes two reactions: the carboxylation of D-ribulose 1,5-bisphosphate, the primary event in carbon dioxide fixation, as well as the oxidative fragmentation of the pentose substrate in the photorespiration process. Both reactions occur simultaneously and in competition at the same active site. In Flaveria bidentis (Coastal plain yellowtops), this protein is Ribulose bisphosphate carboxylase large chain.